The chain runs to 229 residues: Putative N-acetylmannosamine-6-phosphate 2-epimerase 2 (229 aa).

It belongs to the NanE family.

The catalysed reaction is an N-acyl-D-glucosamine 6-phosphate = an N-acyl-D-mannosamine 6-phosphate. Its pathway is amino-sugar metabolism; N-acetylneuraminate degradation; D-fructose 6-phosphate from N-acetylneuraminate: step 3/5. In terms of biological role, converts N-acetylmannosamine-6-phosphate (ManNAc-6-P) to N-acetylglucosamine-6-phosphate (GlcNAc-6-P). The protein is Putative N-acetylmannosamine-6-phosphate 2-epimerase 2 of Salmonella paratyphi A (strain ATCC 9150 / SARB42).